Here is a 116-residue protein sequence, read N- to C-terminus: UPF0127 protein PF1050 (116 aa).

Belongs to the UPF0127 family.

The protein is UPF0127 protein PF1050 of Pyrococcus furiosus (strain ATCC 43587 / DSM 3638 / JCM 8422 / Vc1).